The primary structure comprises 240 residues: 1-(5-phosphoribosyl)-5-[(5-phosphoribosylamino)methylideneamino] imidazole-4-carboxamide isomerase (240 aa).

Residue D8 is the Proton acceptor of the active site. D130 (proton donor) is an active-site residue.

It belongs to the HisA/HisF family.

The protein resides in the cytoplasm. It catalyses the reaction 1-(5-phospho-beta-D-ribosyl)-5-[(5-phospho-beta-D-ribosylamino)methylideneamino]imidazole-4-carboxamide = 5-[(5-phospho-1-deoxy-D-ribulos-1-ylimino)methylamino]-1-(5-phospho-beta-D-ribosyl)imidazole-4-carboxamide. Its pathway is amino-acid biosynthesis; L-histidine biosynthesis; L-histidine from 5-phospho-alpha-D-ribose 1-diphosphate: step 4/9. The sequence is that of 1-(5-phosphoribosyl)-5-[(5-phosphoribosylamino)methylideneamino] imidazole-4-carboxamide isomerase from Flavobacterium johnsoniae (strain ATCC 17061 / DSM 2064 / JCM 8514 / BCRC 14874 / CCUG 350202 / NBRC 14942 / NCIMB 11054 / UW101) (Cytophaga johnsonae).